The sequence spans 165 residues: MNTLQKGFTLIELMIVIAIVGILAAVALPAYQDYTARAQVSEAILLAEGQKSAVTEYYLNHGKWPENNTSAGVASPPSDIKGKYVKEVEVKNGVVTATMLSSGVNNEIKGKKLSLWARRENGSVKWFCGQPVTRTDDDTVADAKDGKEIDTKHLPSTCRDNFDAK.

Positions 1–7 (MNTLQKG) are cleaved as a propeptide — leader sequence. The residue at position 8 (phenylalanine 8) is an N-methylphenylalanine. Residues 8–28 (FTLIELMIVIAIVGILAAVAL) traverse the membrane as a helical segment. Serine 70 carries O-linked (DADDGlc) serine glycosylation. Serine 75 bears the O-(2-aminoethylphosphoryl)serine; alternate mark. Serine 75 bears the O-(2-cholinephosphoryl)serine; alternate mark. Serine 75 is subject to Phosphoserine; alternate. Serine 101 is modified (O-(sn-1-glycerophosphoryl)serine; partial). Residues cysteine 128 and cysteine 158 are joined by a disulfide bond. Residues 137–153 (DDTVADAKDGKEIDTKH) are compositionally biased toward basic and acidic residues. The tract at residues 137 to 165 (DDTVADAKDGKEIDTKHLPSTCRDNFDAK) is disordered.

This sequence belongs to the N-Me-Phe pilin family. In terms of assembly, the pili are polar flexible filaments of about 5.4 nanometers diameter and 2.5 micrometers average length; they consist of only a single polypeptide chain arranged in a helical configuration of five subunits per turn in the assembled pilus. Post-translationally, the O-linked glycan identified as Gal-GlcNAc disaccharide in PubMed:7477282 and PubMed:10048019 is now identified as either a hexosyl-diacetamidotrideoxyhexoside (DATDHex) by mass spectrometry in PubMed:15249686, or alpha-D-galactopyranosyl-(1-&gt;3)-2,4-diacetamido-2,4-dideoxy-beta-D-glucopyranoside (DADDGlc) by X-ray diffraction in PubMed:16949362. It is not clear whether there is a chemical difference in the glycosylation of the two derivatives of strain MS11 used in these experiments, or not. In terms of processing, in some MS11 derivative strains, Ser-75 is modified to O-(2-aminoethylphosphoryl)serine, and in some other derivatives that can be secondarily modified to O-(2-cholinephosphoryl)serine by N-methylation.

It localises to the fimbrium. The protein resides in the membrane. Functionally, major component of the type IV pilus (T4P) that plays a role in cellular adherence, microcolony formation, resistance to neutrophil mediated killing, twitching motility as well as transformation. Mediates the attachment and the formation of bacterial microcolonies on host epithelial cells. Mechanistically, pili retractation induces host NF-kappa-B activation in infected cells, which is temporally associated with the formation of gonococcal microcolonies. This is Type IV major pilin protein PilE1 (pilE1) from Neisseria gonorrhoeae.